Here is a 403-residue protein sequence, read N- to C-terminus: Phosphoglycerate kinase (403 aa).

Residues 22–24, arginine 37, 60–63, arginine 119, and arginine 152 each bind substrate; these read DLN and HLGN. ATP contacts are provided by residues lysine 202, glutamate 325, and 355-358; that span reads GGDT.

The protein belongs to the phosphoglycerate kinase family. In terms of assembly, monomer.

It is found in the cytoplasm. It carries out the reaction (2R)-3-phosphoglycerate + ATP = (2R)-3-phospho-glyceroyl phosphate + ADP. The protein operates within carbohydrate degradation; glycolysis; pyruvate from D-glyceraldehyde 3-phosphate: step 2/5. The chain is Phosphoglycerate kinase from Orientia tsutsugamushi (strain Boryong) (Rickettsia tsutsugamushi).